The sequence spans 538 residues: Sucrose transport protein SUT1 (538 aa).

Residues 1–52 lie on the Cytoplasmic side of the membrane; that stretch reads MARGSGAGGGGGGGGGGLELSVGVGGGGGARGGGGGEAAAAVETAAPISLGR. Residues 53-73 form a helical membrane-spanning segment; that stretch reads LILSGMVAGGVQYGWALQLSL. Topologically, residues 74–81 are extracellular; it reads LTPYVQTL. A helical membrane pass occupies residues 82 to 102; that stretch reads GLSHALTSFMWLCGPIAGMVV. Over 103–123 the chain is Cytoplasmic; sequence QPCVGLYSDRCTSKWGRRRPY. The chain crosses the membrane as a helical span at residues 124–144; the sequence is ILTGCVLICLAVVVIGFSADI. The Extracellular segment spans residues 145 to 162; that stretch reads GYAMGDTKEDCSVYHGSR. Residues 163 to 183 form a helical membrane-spanning segment; that stretch reads WHAAIVYVLGFWLLDFSNNTV. Over 184 to 198 the chain is Cytoplasmic; the sequence is QGPARALMADLSGRH. Residues 199–219 form a helical membrane-spanning segment; it reads GPGTANSIFCSWMAMGNILGY. The Extracellular segment spans residues 220–247; the sequence is SSGSTNNWHKWFPFLKTRACCEACANLK. A helical membrane pass occupies residues 248 to 268; the sequence is GAFLVAVIFLSLCLVITLIFA. Residues 269-306 lie on the Cytoplasmic side of the membrane; it reads KEVPFKGNAALPTKSNEPAEPEGTGPLAVLKGFRNLPT. A helical transmembrane segment spans residues 307–327; that stretch reads GMPSVLIVTGLTWLSWFPFIL. The Extracellular portion of the chain corresponds to 328–357; that stretch reads YDTDWMGREIYHGDPKGTDPQIEAFNQGVR. The helical transmembrane segment at 358–378 threads the bilayer; the sequence is AGAFGLLLNSIVLGFSSFLIE. At 379–388 the chain is on the cytoplasmic side; sequence PMCRKVGPRV. The chain crosses the membrane as a helical span at residues 389 to 409; the sequence is VWVTSNFLVCIAMAATALISF. Over 410-433 the chain is Extracellular; that stretch reads WSLKDFHGTVQKAITADKSIKAVC. Residues 434–454 traverse the membrane as a helical segment; that stretch reads LVLFAFLGVPLAVLYSVPFAV. The Cytoplasmic portion of the chain corresponds to 455 to 470; the sequence is TAQLAATRGGGQGLCT. A helical transmembrane segment spans residues 471–491; that stretch reads GVLNISIVIPQVVIALGAGPW. Topologically, residues 492–499 are extracellular; that stretch reads DELFGKGN. A helical membrane pass occupies residues 500 to 520; sequence IPAFGLASGFALIGGVAGIFL. The Cytoplasmic segment spans residues 521–538; that stretch reads LPKISKRQFRSVSMGGGH.

It belongs to the glycoside-pentoside-hexuronide (GPH) cation symporter transporter (TC 2.A.2.4) family. In terms of assembly, homodimer.

It localises to the cell membrane. The protein operates within glycan biosynthesis; sucrose metabolism. Responsible for the transport of sucrose into the cell, with the concomitant uptake of protons (symport system). May also transport other glucosides. May be required for apoplastic phloem sucrose loading in source tissues (e.g. leaves) in order to transport it to sink tissues (e.g. roots, flowers). The sequence is that of Sucrose transport protein SUT1 (SUT1) from Oryza sativa subsp. indica (Rice).